Here is a 669-residue protein sequence, read N- to C-terminus: Acyl-coenzyme A oxidase 1 (669 aa).

The FAD site is built by Thr-152 and Gly-191. Glu-434 serves as the catalytic Proton acceptor. Residue Tyr-544 is modified to Phosphotyrosine. Phosphoserine is present on Ser-551. A Microbody targeting signal motif is present at residues 667–669 (AHL).

This sequence belongs to the acyl-CoA oxidase family. In terms of assembly, homodimer. FAD serves as cofactor. In terms of tissue distribution, expressed in glia.

It is found in the peroxisome. The protein localises to the nucleus. It catalyses the reaction a 2,3-saturated acyl-CoA + O2 = a (2E)-enoyl-CoA + H2O2. Its pathway is lipid metabolism; peroxisomal fatty acid beta-oxidation. Catalyzes the desaturation of acyl-CoAs to 2-trans-enoyl-CoAs. First enzyme of the fatty acid beta-oxidation pathway. The polypeptide is Acyl-coenzyme A oxidase 1 (Drosophila melanogaster (Fruit fly)).